Consider the following 604-residue polypeptide: Kelch-like protein 15 (604 aa).

A BTB domain is found at 31 to 98; that stretch reads LDVTLLIEEH…MYYGSLELSM (68 aa). A BACK domain is found at 133–237; sequence CAEVMRLLED…TPANIFEKVK (105 aa). 5 Kelch repeats span residues 328–379, 381–426, 428–473, 489–542, and 544–592; these read FAFL…VIGK, IYAV…VLNG, LYIT…NKSK, KLYV…VLDK, and IMVL…SLHF.

Its subcellular location is the nucleus. It participates in protein modification; protein ubiquitination. Functionally, substrate-specific adapter for an E3 ubiquitin-protein ligase complex. The chain is Kelch-like protein 15 (klhl15) from Danio rerio (Zebrafish).